Here is a 209-residue protein sequence, read N- to C-terminus: uncharacterized protein (209 aa).

A signal peptide spans 1–17 (MKKLVTGLLALSLFLAA). The tract at residues 17 to 106 (ACGQDSDQQK…SGQTTNNQKS (90 aa)) is disordered. C18 carries the N-palmitoyl cysteine lipid modification. C18 carries S-diacylglycerol cysteine lipidation. Positions 23-70 (DQQKDSNKEKDDKAKTEQQDKKTNDSSKDKKDNKDDSKDVNKDNKDNS) are enriched in basic and acidic residues. The span at 71–106 (ANDNQQQSNSNATNNDQNQTNNNQSNSGQTTNNQKS) shows a compositional bias: low complexity.

It is found in the cell membrane. This is an uncharacterized protein from Staphylococcus aureus (strain MRSA252).